We begin with the raw amino-acid sequence, 617 residues long: MYYLPSSCLVLFLFFSLFYHLPCASSKQTLGWCESQFQCGNITAGFPFWGGNRPEVCGHPLLELHCLDNITSLTISDHLYHVLSINHTYNTLRVARTDFLQSICLSPFPFANATLPPEIFDILPTYKSVTLYRCYPVIPDLARYGCPAIGSVSVSDNLENPVSCEARFTVNIPTSFVPNEKRLNITSLVRDVRNGFEVRLRIDENSCQECSSSHKYCGFTGTLPLETKCRPLNLPTRLSSEAKIATIAGVSLLPFLVLTLVVHIIRKQKTSNDKGQQDLKEHIPKPRIKALIQLKQYSYEQVKRITNSFAEVVGRGGFGIVYRGTLSDGRMVAVKVLKDLKGNNGEDFINEVASMSQTSHVNIVTLLGFCSEGYKRAIIYEFMENGSLDKFISSKKSSTMDWRELYGIALGVARGLEYLHHGCRTRIVHFDIKPQNVLLDDNLSPKVSDFGLAKLCERKESILSLMDTRGTIGYIAPEVFSRVYGSVSHKSDVYSYGMLVLDIIGARNKTSTEDTTSSTSSMYFPEWIYKDLEKGDNGRLIVNRSEEDEIAKKMTLVGLWCIQPWPLDRPAMNRVVEMMEGNLDALEVPPRPVLQCSVVPHLDSSWISEENSISSEI.

A signal peptide spans 1–26 (MYYLPSSCLVLFLFFSLFYHLPCASS). Topologically, residues 27–243 (KQTLGWCESQ…LPTRLSSEAK (217 aa)) are extracellular. N41, N69, N86, N112, and N184 each carry an N-linked (GlcNAc...) asparagine glycan. A helical transmembrane segment spans residues 244 to 264 (IATIAGVSLLPFLVLTLVVHI). Over 265–617 (IRKQKTSNDK…SEENSISSEI (353 aa)) the chain is Cytoplasmic. One can recognise a Protein kinase domain in the interval 307-594 (NSFAEVVGRG…ALEVPPRPVL (288 aa)). ATP-binding positions include 313-321 (VGRGGFGIV) and K335. Y380 carries the phosphotyrosine modification. The active-site Proton acceptor is D431. Phosphothreonine occurs at positions 468 and 471.

It belongs to the protein kinase superfamily. Ser/Thr protein kinase family.

It is found in the membrane. It catalyses the reaction L-seryl-[protein] + ATP = O-phospho-L-seryl-[protein] + ADP + H(+). The catalysed reaction is L-threonyl-[protein] + ATP = O-phospho-L-threonyl-[protein] + ADP + H(+). The sequence is that of LEAF RUST 10 DISEASE-RESISTANCE LOCUS RECEPTOR-LIKE PROTEIN KINASE-like 2.4 from Arabidopsis thaliana (Mouse-ear cress).